The primary structure comprises 287 residues: Large ribosomal subunit protein uL3 (287 aa).

The interval 228 to 287 is disordered; sequence KAPEAKPAKLSKKKQAKELAKAQAANQQTVEAKVDTPVVEPKPTEVKKAAPVVEKKGEDK. Residues 269 to 287 show a composition bias toward basic and acidic residues; that stretch reads KPTEVKKAAPVVEKKGEDK.

This sequence belongs to the universal ribosomal protein uL3 family. Part of the 50S ribosomal subunit. Forms a cluster with proteins L14 and L19.

Its function is as follows. One of the primary rRNA binding proteins, it binds directly near the 3'-end of the 23S rRNA, where it nucleates assembly of the 50S subunit. This is Large ribosomal subunit protein uL3 from Mycoplasma pneumoniae (strain ATCC 29342 / M129 / Subtype 1) (Mycoplasmoides pneumoniae).